Here is a 192-residue protein sequence, read N- to C-terminus: Peptidyl-tRNA hydrolase (192 aa).

Position 17 (Tyr17) interacts with tRNA. His22 (proton acceptor) is an active-site residue. 3 residues coordinate tRNA: Phe68, Asn70, and Asn116.

The protein belongs to the PTH family. In terms of assembly, monomer.

It localises to the cytoplasm. The enzyme catalyses an N-acyl-L-alpha-aminoacyl-tRNA + H2O = an N-acyl-L-amino acid + a tRNA + H(+). Hydrolyzes ribosome-free peptidyl-tRNAs (with 1 or more amino acids incorporated), which drop off the ribosome during protein synthesis, or as a result of ribosome stalling. Its function is as follows. Catalyzes the release of premature peptidyl moieties from peptidyl-tRNA molecules trapped in stalled 50S ribosomal subunits, and thus maintains levels of free tRNAs and 50S ribosomes. This is Peptidyl-tRNA hydrolase from Xylella fastidiosa (strain M12).